Here is a 54-residue protein sequence, read N- to C-terminus: Relaxin (54 aa).

The residue at position 1 (Gln1) is a Pyrrolidone carboxylic acid. 3 cysteine pairs are disulfide-bonded: Cys10-Cys41, Cys22-Cys54, and Cys40-Cys45.

It belongs to the insulin family. In terms of assembly, heterodimer of a B chain and an A chain linked by two disulfide bonds.

It is found in the secreted. In terms of biological role, relaxin is an ovarian hormone that acts with estrogen to produce dilatation of the birth canal in many mammals. The polypeptide is Relaxin (Balaenoptera edeni (Pigmy Bryde's whale)).